Consider the following 289-residue polypeptide: ATP synthase gamma chain (289 aa).

The protein belongs to the ATPase gamma chain family. In terms of assembly, F-type ATPases have 2 components, CF(1) - the catalytic core - and CF(0) - the membrane proton channel. CF(1) has five subunits: alpha(3), beta(3), gamma(1), delta(1), epsilon(1). CF(0) has three main subunits: a, b and c.

The protein resides in the cell inner membrane. Its function is as follows. Produces ATP from ADP in the presence of a proton gradient across the membrane. The gamma chain is believed to be important in regulating ATPase activity and the flow of protons through the CF(0) complex. The polypeptide is ATP synthase gamma chain (Cereibacter sphaeroides (strain ATCC 17029 / ATH 2.4.9) (Rhodobacter sphaeroides)).